The primary structure comprises 155 residues: Regulatory protein RecX (155 aa).

This sequence belongs to the RecX family.

It is found in the cytoplasm. Functionally, modulates RecA activity. The polypeptide is Regulatory protein RecX (Pseudomonas fluorescens (strain ATCC BAA-477 / NRRL B-23932 / Pf-5)).